Here is a 128-residue protein sequence, read N- to C-terminus: RutC family protein BU371 (128 aa).

It belongs to the RutC family.

The protein is RutC family protein BU371 of Buchnera aphidicola subsp. Acyrthosiphon pisum (strain APS) (Acyrthosiphon pisum symbiotic bacterium).